The following is a 388-amino-acid chain: Chorismate synthase (388 aa).

Residues Arg-39 and Arg-45 each contribute to the NADP(+) site. FMN-binding positions include 130-132 (RSS), 251-252 (NA), Ala-296, 311-315 (KPIPT), and Arg-337.

This sequence belongs to the chorismate synthase family. Homotetramer. FMNH2 is required as a cofactor.

The enzyme catalyses 5-O-(1-carboxyvinyl)-3-phosphoshikimate = chorismate + phosphate. Its pathway is metabolic intermediate biosynthesis; chorismate biosynthesis; chorismate from D-erythrose 4-phosphate and phosphoenolpyruvate: step 7/7. Its function is as follows. Catalyzes the anti-1,4-elimination of the C-3 phosphate and the C-6 proR hydrogen from 5-enolpyruvylshikimate-3-phosphate (EPSP) to yield chorismate, which is the branch point compound that serves as the starting substrate for the three terminal pathways of aromatic amino acid biosynthesis. This reaction introduces a second double bond into the aromatic ring system. The chain is Chorismate synthase from Streptococcus equi subsp. zooepidemicus (strain H70).